We begin with the raw amino-acid sequence, 218 residues long: Adenylate kinase (218 aa).

10–15 (GAGKGT) provides a ligand contact to ATP. An NMP region spans residues 30–59 (STGDMLRAAVKAGTPLGVEAKKIMDAGALV). AMP contacts are provided by residues T31, R36, 57 to 59 (ALV), 85 to 88 (GFPR), and Q92. The segment at 122–159 (GRRSHTASGRTYHVKYNPPKVEGKDDVTGEPLIQREDD) is LID. Residues R123 and 132-133 (TY) each bind ATP. AMP contacts are provided by R156 and R167. G203 lines the ATP pocket.

This sequence belongs to the adenylate kinase family. In terms of assembly, monomer.

It localises to the cytoplasm. It carries out the reaction AMP + ATP = 2 ADP. The protein operates within purine metabolism; AMP biosynthesis via salvage pathway; AMP from ADP: step 1/1. Its function is as follows. Catalyzes the reversible transfer of the terminal phosphate group between ATP and AMP. Plays an important role in cellular energy homeostasis and in adenine nucleotide metabolism. The protein is Adenylate kinase of Polaromonas sp. (strain JS666 / ATCC BAA-500).